A 92-amino-acid chain; its full sequence is Small ribosomal subunit protein uS19 (92 aa).

It belongs to the universal ribosomal protein uS19 family.

Protein S19 forms a complex with S13 that binds strongly to the 16S ribosomal RNA. This Staphylococcus carnosus (strain TM300) protein is Small ribosomal subunit protein uS19.